Reading from the N-terminus, the 284-residue chain is Bifunctional protein FolD (284 aa).

NADP(+) contacts are provided by residues 166–168 and I232; that span reads GAS.

The protein belongs to the tetrahydrofolate dehydrogenase/cyclohydrolase family. In terms of assembly, homodimer.

It catalyses the reaction (6R)-5,10-methylene-5,6,7,8-tetrahydrofolate + NADP(+) = (6R)-5,10-methenyltetrahydrofolate + NADPH. It carries out the reaction (6R)-5,10-methenyltetrahydrofolate + H2O = (6R)-10-formyltetrahydrofolate + H(+). Its pathway is one-carbon metabolism; tetrahydrofolate interconversion. Functionally, catalyzes the oxidation of 5,10-methylenetetrahydrofolate to 5,10-methenyltetrahydrofolate and then the hydrolysis of 5,10-methenyltetrahydrofolate to 10-formyltetrahydrofolate. The polypeptide is Bifunctional protein FolD (Stutzerimonas stutzeri (strain A1501) (Pseudomonas stutzeri)).